The primary structure comprises 162 residues: Probable cytosine deaminase (162 aa).

Positions 8-132 constitute a CMP/dCMP-type deaminase domain; sequence EKDLAYLREA…PLYINSRDIL (125 aa). H59 is a Zn(2+) binding site. The active-site Proton donor is E61. Zn(2+) is bound by residues C87 and C90. Substrate is bound at residue D159.

It belongs to the cytidine and deoxycytidylate deaminase family. Homodimer. Zn(2+) serves as cofactor.

It localises to the cytoplasm. It is found in the nucleus. It carries out the reaction cytosine + H2O + H(+) = uracil + NH4(+). It participates in pyrimidine metabolism; UMP biosynthesis via salvage pathway; uracil from cytosine: step 1/1. Functionally, catalyzes the hydrolytic deamination of cytosine to uracil or 5-methylcytosine to thymine. Is involved in the pyrimidine salvage pathway, which allows the cell to utilize cytosine for pyrimidine nucleotide synthesis. In Schizosaccharomyces pombe (strain 972 / ATCC 24843) (Fission yeast), this protein is Probable cytosine deaminase.